The chain runs to 80 residues: Defensin-like protein CAL1 (80 aa).

A signal peptide spans 1–31 (MAPSRRMVASAFLLLAILVATEMGTTKVAEA). Intrachain disulfides connect Cys34–Cys80, Cys45–Cys65, Cys51–Cys74, and Cys55–Cys76.

It belongs to the DEFL family. Expressed preferentially in root exodermis and xylem parenchyma cells in vasculature of root and flag leaf sheath.

The protein localises to the secreted. It is found in the extracellular space. Its function is as follows. Plant defensin-like protein involved in accumulation of cadmium (Cd) in rice leaves. Mediates Cd efflux from cytosol into extracellular spaces via chelation. This drives Cd secretion from xylem parenchyma cells into the xylem vessels, hence lowering Cd levels in cytosol meanwhile promoting Cd translocation from roots to shoots. The chain is Defensin-like protein CAL1 from Oryza sativa subsp. japonica (Rice).